The sequence spans 571 residues: MSTDELLTFDHVDIRFPIELNKQGSCSLNLTNKTDNYVAFKAQTTKPKMYCVKPSVGVVLPRSSCEVLVVMQALKEAPADRQCKDKLLFQCKVVEPGTMDKEVTSEMFSKEAGHRVEETIFKIIYVAPPQPQSPVQEGLEDGSSPSASVSDKGNASEVFVGPSVGIVDLIRMSDELLIIDPVDVQFPIELNKKVSCSLNLTNKTENYVAFKAKTTNAKKYYVRPNVGVVLPRSSCEVLVIMQALKEAPADMQCRDKLLFQCKVVEPETTAKDVTSEMFSKEAGHPAEETRLKVMYVTPPQPPSPVQEGTEEGSSPRASVSDNGNASEAFVDMLRSLLVPLFSNAASSTDDHGITLPQYQVFINFRGDELRNSFVGFLVKAMRLEKINVFTDEVELRGTNLNYLFRRIEESRVAVAIFSERYTESCWCLDELVKMKEQMEQGKLVVVPVFYRLNATACKRFMGAFGDNLRNLEWEYRSEPERIQKWKEALSSVFSNIGLTSDIRRYNLINKNMDHTSEFLYIVLILNFFSEISDMTGLTTSYQFLLMMKSNLISYDIYIYPTKFCVNVFIGV.

One can recognise an MSP 1 domain in the interval 1 to 126; it reads MSTDELLTFD…EETIFKIIYV (126 aa). The disordered stretch occupies residues 132–154; the sequence is QSPVQEGLEDGSSPSASVSDKGN. A compositionally biased stretch (polar residues) spans 143–153; it reads SSPSASVSDKG. In terms of domain architecture, MSP 2 spans 176-296; that stretch reads LLIIDPVDVQ…EETRLKVMYV (121 aa). The segment at 297–322 is disordered; it reads TPPQPPSPVQEGTEEGSSPRASVSDN. A compositionally biased stretch (polar residues) spans 311 to 322; the sequence is EGSSPRASVSDN. The TIR domain maps to 356 to 493; it reads PQYQVFINFR…KWKEALSSVF (138 aa). Glu430 is an active-site residue.

It belongs to the VAMP-associated protein (VAP) (TC 9.B.17) family.

It catalyses the reaction NAD(+) + H2O = ADP-D-ribose + nicotinamide + H(+). Functionally, may play a role in vesicle trafficking. This is Vesicle-associated protein 1-4 (PVA14) from Arabidopsis thaliana (Mouse-ear cress).